The chain runs to 427 residues: Enolase (427 aa).

Gln-163 lines the (2R)-2-phosphoglycerate pocket. The active-site Proton donor is Glu-205. Positions 242, 285, and 312 each coordinate Mg(2+). Positions 337, 366, 367, and 388 each coordinate (2R)-2-phosphoglycerate. Lys-337 (proton acceptor) is an active-site residue.

Belongs to the enolase family. Mg(2+) is required as a cofactor.

The protein resides in the cytoplasm. Its subcellular location is the secreted. It is found in the cell surface. The enzyme catalyses (2R)-2-phosphoglycerate = phosphoenolpyruvate + H2O. It participates in carbohydrate degradation; glycolysis; pyruvate from D-glyceraldehyde 3-phosphate: step 4/5. Its function is as follows. Catalyzes the reversible conversion of 2-phosphoglycerate (2-PG) into phosphoenolpyruvate (PEP). It is essential for the degradation of carbohydrates via glycolysis. This is Enolase from Rhodopseudomonas palustris (strain TIE-1).